Here is a 250-residue protein sequence, read N- to C-terminus: Cell division protein ZapD (250 aa).

The protein belongs to the ZapD family. In terms of assembly, interacts with FtsZ.

The protein resides in the cytoplasm. Cell division factor that enhances FtsZ-ring assembly. Directly interacts with FtsZ and promotes bundling of FtsZ protofilaments, with a reduction in FtsZ GTPase activity. The sequence is that of Cell division protein ZapD from Bordetella petrii (strain ATCC BAA-461 / DSM 12804 / CCUG 43448).